The primary structure comprises 257 residues: Phosphonates import ATP-binding protein PhnC (257 aa).

The ABC transporter domain maps to 2 to 246 (IEFRNVSKVY…KFAEIYGDVA (245 aa)). 35 to 42 (GLSGAGKS) lines the ATP pocket.

This sequence belongs to the ABC transporter superfamily. Phosphonates importer (TC 3.A.1.9.1) family. As to quaternary structure, the complex is composed of two ATP-binding proteins (PhnC), two transmembrane proteins (PhnE) and a solute-binding protein (PhnD).

It is found in the cell membrane. It carries out the reaction phosphonate(out) + ATP + H2O = phosphonate(in) + ADP + phosphate + H(+). In terms of biological role, part of the ABC transporter complex PhnCDE involved in phosphonates import. Responsible for energy coupling to the transport system. In Bacillus cereus (strain ATCC 14579 / DSM 31 / CCUG 7414 / JCM 2152 / NBRC 15305 / NCIMB 9373 / NCTC 2599 / NRRL B-3711), this protein is Phosphonates import ATP-binding protein PhnC.